A 577-amino-acid chain; its full sequence is (E)-beta-farnesene synthase (577 aa).

Residues Asp-327, Asp-331, Asp-474, Ser-478, and Glu-482 each coordinate Mg(2+). The DDXXD motif signature appears at 327–331; it reads DDTFD.

It belongs to the terpene synthase family. Mg(2+) serves as cofactor. Requires Co(2+) as cofactor. It depends on Mn(2+) as a cofactor. Expressed in flowers.

It is found in the cytoplasm. The catalysed reaction is (2E,6E)-farnesyl diphosphate = (E)-beta-farnesene + diphosphate. The protein operates within secondary metabolite biosynthesis; terpenoid biosynthesis. Its activity is regulated as follows. Strongly inhibited by manganese at concentration higher than 20 uM. In terms of biological role, sesquiterpene cyclase catalyzing the production of beta-farnesene from farnesyl diphosphate. Unable to use geranyl diphosphate as substrate. This Artemisia annua (Sweet wormwood) protein is (E)-beta-farnesene synthase (CASC125).